A 216-amino-acid polypeptide reads, in one-letter code: Trimethylamine corrinoid protein 1 (216 aa).

Residues 1–92 (MASKEEIIAK…EMEKRKSETK (92 aa)) form the B12-binding N-terminal domain. In terms of domain architecture, B12-binding spans 94–216 (LGTVVIGTIE…VVSKVRAVLL (123 aa)). Histidine 107 serves as a coordination point for methylcob(III)alamin.

This sequence belongs to the methylamine corrinoid protein family. Can form a complex with MttB.

The protein operates within one-carbon metabolism; methanogenesis from trimethylamine. In terms of biological role, acts probably as a methyl group carrier between MttB and either MtbA or MtaA. In Methanosarcina acetivorans (strain ATCC 35395 / DSM 2834 / JCM 12185 / C2A), this protein is Trimethylamine corrinoid protein 1 (mttC1).